A 322-amino-acid polypeptide reads, in one-letter code: MNWLTNVVRPKIRNILRRETPENLWIKCPDTGQLVFYKDVEQNQFVIPGSNYHMRMGATARLRSVFDNETWYDVALPEVTADPLKFRDERKYVDRIKDARAKTGAHDAVKVGYGKLEGLGVVAAVQDFDFMGGSLGMAAGEAIIRGLELAVEKHAPFIMFAASGGARMQEGILSLMQMPRTTVAVQLLREAGLPYIVVLTNPTTGGVTASYAMLGDIQLAEPGALIGFAGARVIEQTIREKLPDGFQRAEYLRDHGMVDMVVHRHELRPTLARLCRILTKTPLPAVEEPAVVDDDAQDIEAVATEIVATPPEPAPPPAAPQA.

Residues 24–293 (LWIKCPDTGQ…PAVEEPAVVD (270 aa)) enclose the CoA carboxyltransferase N-terminal domain.

Belongs to the AccD/PCCB family. In terms of assembly, acetyl-CoA carboxylase is a heterohexamer composed of biotin carboxyl carrier protein (AccB), biotin carboxylase (AccC) and two subunits each of ACCase subunit alpha (AccA) and ACCase subunit beta (AccD).

It localises to the cytoplasm. It carries out the reaction N(6)-carboxybiotinyl-L-lysyl-[protein] + acetyl-CoA = N(6)-biotinyl-L-lysyl-[protein] + malonyl-CoA. The protein operates within lipid metabolism; malonyl-CoA biosynthesis; malonyl-CoA from acetyl-CoA: step 1/1. Functionally, component of the acetyl coenzyme A carboxylase (ACC) complex. Biotin carboxylase (BC) catalyzes the carboxylation of biotin on its carrier protein (BCCP) and then the CO(2) group is transferred by the transcarboxylase to acetyl-CoA to form malonyl-CoA. The protein is Acetyl-coenzyme A carboxylase carboxyl transferase subunit beta of Rhodopseudomonas palustris (strain HaA2).